The primary structure comprises 117 residues: MDKKSARIRRAARARHMMREQGVTRLVVHRTPRHIYAQVIAPNGSEVLAAASTVEKEISAQVKYTGNKDAAAVVGKLVAERALAKGVKDVAFDRSGFKYHGRVQSLADAAREAGLQF.

This sequence belongs to the universal ribosomal protein uL18 family. Part of the 50S ribosomal subunit; part of the 5S rRNA/L5/L18/L25 subcomplex. Contacts the 5S and 23S rRNAs.

Functionally, this is one of the proteins that bind and probably mediate the attachment of the 5S RNA into the large ribosomal subunit, where it forms part of the central protuberance. In Actinobacillus succinogenes (strain ATCC 55618 / DSM 22257 / CCUG 43843 / 130Z), this protein is Large ribosomal subunit protein uL18.